Reading from the N-terminus, the 196-residue chain is dCTP deaminase, dUMP-forming (196 aa).

DCTP-binding positions include 101–106, D119, 127–129, Q148, Y162, and Q174; these read KSSLGR and TLE. E129 acts as the Proton donor/acceptor in catalysis.

It belongs to the dCTP deaminase family. In terms of assembly, homotrimer.

It carries out the reaction dCTP + 2 H2O = dUMP + NH4(+) + diphosphate. It functions in the pathway pyrimidine metabolism; dUMP biosynthesis; dUMP from dCTP: step 1/1. In terms of biological role, bifunctional enzyme that catalyzes both the deamination of dCTP to dUTP and the hydrolysis of dUTP to dUMP without releasing the toxic dUTP intermediate. The protein is dCTP deaminase, dUMP-forming of Tropheryma whipplei (strain TW08/27) (Whipple's bacillus).